The following is a 684-amino-acid chain: MPSIRAPLALTSFLLSLSGKPSTCVRSGLAANSRPWFGSIAGRNRVLANAPWWGGKAELSTDNSVVSGGKEENVDLKQYPPHLIRNFSIIAHVDHGKSTLADRLLELTGTIRKGHGQPQFLDKLQVERERGITVKAQTATMFYNYRSKKTGGANERFLLNLIDTPGHVDFSYEVSRSLAACQGVLLLVDAAQGVQAQTVANFYLAFESDLAIIPVINKIDQINADPEGVKSQLKQIFDIDPESVLLTSAKTGLGLENILPAVIERIPQPKGLVDASLRMLLLDSYYDEYRGVICHVAVVDGVLKRGDKIESAATRQSYEIMEVGILYPELTNTGILLTGQVGYVVTGMRSTKEARIGDTLFHTRSVVEPLPGFKPARHMVFAGVYPADGSDYEALSSAVERLTCNDASVSIAKETSGALGIGFRCGFLGLLHMDVFHQRLEQEHGAQVITTTPTVPYIFEYSDGSKLTIQNPAALPSNPKSRLVACYEPTVMATIITPSEYVGSLMTLCSERRGQQTEYSFIDGQRAMLKYRMPLREVVIDFYNELKSITSGYASFDYEEAPYQESDLVKLDILLNGQPVDALASICHRSKAHYVGRELCEKLKKVLDRQMFEVAIQAAIGAKVVARETLPALRKNVLAKCYGGDVSRKRKLLEKQKEGKKRMKRVGNVDIPQEAFHSLLKTGN.

Residues 82 to 270 (HLIRNFSIIA…AVIERIPQPK (189 aa)) enclose the tr-type G domain. Residues 91–98 (AHVDHGKS), 163–167 (DTPGH), and 217–220 (NKID) contribute to the GTP site.

The protein belongs to the TRAFAC class translation factor GTPase superfamily. Classic translation factor GTPase family. LepA subfamily.

The protein resides in the mitochondrion inner membrane. The enzyme catalyses GTP + H2O = GDP + phosphate + H(+). Promotes mitochondrial protein synthesis. May act as a fidelity factor of the translation reaction, by catalyzing a one-codon backward translocation of tRNAs on improperly translocated ribosomes. Binds to mitochondrial ribosomes in a GTP-dependent manner. This Physcomitrium patens (Spreading-leaved earth moss) protein is Translation factor GUF1 homolog, mitochondrial.